Consider the following 202-residue polypeptide: ATP-dependent Clp protease proteolytic subunit (202 aa).

The active-site Nucleophile is the Ser-106. His-131 is an active-site residue.

This sequence belongs to the peptidase S14 family. As to quaternary structure, fourteen ClpP subunits assemble into 2 heptameric rings which stack back to back to give a disk-like structure with a central cavity, resembling the structure of eukaryotic proteasomes.

It is found in the cytoplasm. It catalyses the reaction Hydrolysis of proteins to small peptides in the presence of ATP and magnesium. alpha-casein is the usual test substrate. In the absence of ATP, only oligopeptides shorter than five residues are hydrolyzed (such as succinyl-Leu-Tyr-|-NHMec, and Leu-Tyr-Leu-|-Tyr-Trp, in which cleavage of the -Tyr-|-Leu- and -Tyr-|-Trp bonds also occurs).. Its function is as follows. Cleaves peptides in various proteins in a process that requires ATP hydrolysis. Has a chymotrypsin-like activity. Plays a major role in the degradation of misfolded proteins. The protein is ATP-dependent Clp protease proteolytic subunit of Variovorax paradoxus (strain S110).